We begin with the raw amino-acid sequence, 326 residues long: Ornithine carbamoyltransferase (326 aa).

Carbamoyl phosphate contacts are provided by residues 54-57, glutamine 81, arginine 105, and 132-135; these read STRT and HPTQ. Residues asparagine 164, aspartate 225, and 229 to 230 contribute to the L-ornithine site; that span reads SM. Residues 266-267 and arginine 311 contribute to the carbamoyl phosphate site; that span reads CL.

This sequence belongs to the aspartate/ornithine carbamoyltransferase superfamily. OTCase family.

The protein localises to the cytoplasm. The catalysed reaction is carbamoyl phosphate + L-ornithine = L-citrulline + phosphate + H(+). The protein operates within amino-acid biosynthesis; L-arginine biosynthesis; L-arginine from L-ornithine and carbamoyl phosphate: step 1/3. Functionally, reversibly catalyzes the transfer of the carbamoyl group from carbamoyl phosphate (CP) to the N(epsilon) atom of ornithine (ORN) to produce L-citrulline. In Streptococcus mutans serotype c (strain ATCC 700610 / UA159), this protein is Ornithine carbamoyltransferase (argF).